The primary structure comprises 271 residues: Urease accessory protein UreD (271 aa).

This sequence belongs to the UreD family. As to quaternary structure, ureD, UreF and UreG form a complex that acts as a GTP-hydrolysis-dependent molecular chaperone, activating the urease apoprotein by helping to assemble the nickel containing metallocenter of UreC. The UreE protein probably delivers the nickel.

It localises to the cytoplasm. In terms of biological role, required for maturation of urease via the functional incorporation of the urease nickel metallocenter. This Haemophilus influenzae (strain 86-028NP) protein is Urease accessory protein UreD.